Here is a 511-residue protein sequence, read N- to C-terminus: ATP synthase subunit alpha, plastid (511 aa).

170–177 contributes to the ATP binding site; that stretch reads GDRQTGKT.

This sequence belongs to the ATPase alpha/beta chains family. F-type ATPases have 2 components, CF(1) - the catalytic core - and CF(0) - the membrane proton channel. CF(1) has five subunits: alpha(3), beta(3), gamma(1), delta(1), epsilon(1). CF(0) has four main subunits: a, b, b' and c.

The protein resides in the plastid membrane. It catalyses the reaction ATP + H2O + 4 H(+)(in) = ADP + phosphate + 5 H(+)(out). Functionally, produces ATP from ADP in the presence of a proton gradient across the membrane. The alpha chain is a regulatory subunit. In Cuscuta reflexa (Southern Asian dodder), this protein is ATP synthase subunit alpha, plastid.